Reading from the N-terminus, the 83-residue chain is Cytotoxin homolog 5 (83 aa).

Positions 1–21 (MKTLLLTMVVVTIVCLDLGYT) are cleaved as a signal peptide. Intrachain disulfides connect Cys-24–Cys-43, Cys-36–Cys-61, Cys-65–Cys-76, and Cys-77–Cys-82.

Belongs to the three-finger toxin family. Short-chain subfamily. Orphan group XV sub-subfamily. As to expression, expressed by the venom gland.

The protein resides in the secreted. The protein localises to the target cell membrane. In terms of biological role, has low cytotoxic activity. The protein is Cytotoxin homolog 5 of Naja atra (Chinese cobra).